The chain runs to 136 residues: Fatty acid-binding protein homolog 5 (136 aa).

Residues Arg111 and 131–133 contribute to the a fatty acid site; that span reads RAY.

The protein belongs to the calycin superfamily. Fatty-acid binding protein (FABP) family.

This Caenorhabditis elegans protein is Fatty acid-binding protein homolog 5 (lbp-5).